The primary structure comprises 474 residues: Receptor-transporting protein 3 (474 aa).

At 1–453 (MMEEDIGDTE…SCCEAACNCM (453 aa)) the chain is on the cytoplasmic side. Residues 53–164 (TFARFHCPSC…SSNCEACLLG (112 aa)) form a 3CxxC-type zinc finger. Residues 175–304 (SKPPAPPLSP…ISCTSKPSTT (130 aa)) are disordered. Composition is skewed to polar residues over residues 197 to 228 (VTCS…NPTK) and 259 to 304 (VTCS…PSTT). Residues 454–474 (SQSPLCCLAFLILFLLLWYLL) traverse the membrane as a helical segment.

The protein belongs to the TMEM7 family. As to quaternary structure, interacts with TAS2R16. In terms of tissue distribution, expressed predominantly in the liver. Not detected in the olfactory epithelium.

The protein localises to the membrane. In terms of biological role, promotes functional cell surface expression of the bitter taste receptors TAS2R16 and TAS2R43. This is Receptor-transporting protein 3 (Rtp3) from Mus musculus (Mouse).